The primary structure comprises 201 residues: Large ribosomal subunit protein uL4 (201 aa).

The segment at Ala-45–Gly-66 is disordered.

The protein belongs to the universal ribosomal protein uL4 family. Part of the 50S ribosomal subunit.

In terms of biological role, one of the primary rRNA binding proteins, this protein initially binds near the 5'-end of the 23S rRNA. It is important during the early stages of 50S assembly. It makes multiple contacts with different domains of the 23S rRNA in the assembled 50S subunit and ribosome. Forms part of the polypeptide exit tunnel. This is Large ribosomal subunit protein uL4 from Aeromonas hydrophila subsp. hydrophila (strain ATCC 7966 / DSM 30187 / BCRC 13018 / CCUG 14551 / JCM 1027 / KCTC 2358 / NCIMB 9240 / NCTC 8049).